The chain runs to 281 residues: MSLGIVVNVSRQSAIDLARRLARWLDERKVDYVFESLSAEKTGSHRSAPIEELNTQCDAFISLGGDGTLLFTSQHSVTKPVIGVNVGRLGFLAEFSPEEMLPAVERFLNGDYSIHTRSQLEAGLLTNGSPEHFRALNDVVIEKGTYPRIPAFIIKLDGELLSSYRADGIIIATSTGSTAYSMSAGGPIIAPKSSVVVITPICPHMLTVRPIVISDEKSIEVSVDAPDGAFPLNCDGHLRKMLAPQEVVTIKKSSQSINLVANSSRDYCEVLRTKLLWGREA.

Aspartate 66 acts as the Proton acceptor in catalysis. NAD(+) is bound by residues 66 to 67, 137 to 138, arginine 148, arginine 165, aspartate 167, and 178 to 183; these read DG, ND, and TAYSMS.

It belongs to the NAD kinase family. A divalent metal cation serves as cofactor.

It is found in the cytoplasm. The enzyme catalyses NAD(+) + ATP = ADP + NADP(+) + H(+). In terms of biological role, involved in the regulation of the intracellular balance of NAD and NADP, and is a key enzyme in the biosynthesis of NADP. Catalyzes specifically the phosphorylation on 2'-hydroxyl of the adenosine moiety of NAD to yield NADP. The chain is NAD kinase from Chlorobium phaeovibrioides (strain DSM 265 / 1930) (Prosthecochloris vibrioformis (strain DSM 265)).